A 1286-amino-acid polypeptide reads, in one-letter code: DNA-directed RNA polymerase 147 kDa polypeptide (1286 aa).

Belongs to the poxviridae DNA-directed RNA polymerase 147 kDa subunit family. In terms of assembly, the DNA-dependent RNA polymerase used for intermediate and late genes expression consists of eight subunits Rpo30/OPG66, Rpo7/OPG90, Rpo22/OPG103, Rpo147/OPG105, Rpo18/OPG119, Rpo19/OPG131, Rpo132/OPG151 and Rpo35/OPG156. The same holoenzyme, with the addition of the transcription-specificity factor OPG109, is used for early gene expression.

It is found in the virion. The enzyme catalyses RNA(n) + a ribonucleoside 5'-triphosphate = RNA(n+1) + diphosphate. In terms of biological role, part of the DNA-dependent RNA polymerase which catalyzes the transcription of viral DNA into RNA using the four ribonucleoside triphosphates as substrates. Responsible for the transcription of early, intermediate and late genes. DNA-dependent RNA polymerase associates with the early transcription factor (ETF), itself composed of OPG118 and OPG133, thereby allowing the early genes transcription. Late transcription, and probably also intermediate transcription, require newly synthesized RNA polymerase. This Variola virus (isolate Human/India/Ind3/1967) (VARV) protein is DNA-directed RNA polymerase 147 kDa polypeptide (OPG105).